We begin with the raw amino-acid sequence, 288 residues long: 4-hydroxybenzoate octaprenyltransferase (288 aa).

8 helical membrane-spanning segments follow: residues 23–43, 46–66, 98–118, 141–161, 163–183, 213–233, 234–254, and 268–288; these read IGSLLLLWPTLWALWLAGRGI, AKILVVFVLGVFFMRAAGCVV, ILFVVLILLSFGLVLTLNSMT, LPQVVLGAAFGWSIPMGFAAV, ESLPLVCWLLLLANICWTVAY, LIIGLLQLATLLLMVAIGWLM, NLGGAFYWSILLAGALFTHQQ, and AFLNNNYVGLVLFLGILISYW.

It belongs to the UbiA prenyltransferase family. Mg(2+) is required as a cofactor.

It is found in the cell inner membrane. The catalysed reaction is all-trans-octaprenyl diphosphate + 4-hydroxybenzoate = 4-hydroxy-3-(all-trans-octaprenyl)benzoate + diphosphate. Its pathway is cofactor biosynthesis; ubiquinone biosynthesis. Its function is as follows. Catalyzes the prenylation of para-hydroxybenzoate (PHB) with an all-trans polyprenyl group. Mediates the second step in the final reaction sequence of ubiquinone-8 (UQ-8) biosynthesis, which is the condensation of the polyisoprenoid side chain with PHB, generating the first membrane-bound Q intermediate 3-octaprenyl-4-hydroxybenzoate. The sequence is that of 4-hydroxybenzoate octaprenyltransferase from Yersinia pseudotuberculosis serotype IB (strain PB1/+).